The sequence spans 208 residues: MTYDSEFGSHVSLYRDRIKQVIDDSLNEHLNSMILRVDLHDPIDTENMDNPFFQPRVDSGAISRFTSALKAKLKHDKHIKTQRKDWPDSRHSTLRYAWVREYTKNRKRHYHLILCFNQDAYYHLGDYDLNRNTLRTMITTAWYSALGIPIDSSGKLVNYPPNGKYLLNRKRDNFEQTYSDLMNRVDYMTKVRTKIVGDGDRNFGCSRG.

To E.coli YagK.

This is an uncharacterized protein from Escherichia coli (strain K12).